A 119-amino-acid chain; its full sequence is Large ribosomal subunit protein bL20 (119 aa).

It belongs to the bacterial ribosomal protein bL20 family.

Functionally, binds directly to 23S ribosomal RNA and is necessary for the in vitro assembly process of the 50S ribosomal subunit. It is not involved in the protein synthesizing functions of that subunit. This Legionella pneumophila (strain Paris) protein is Large ribosomal subunit protein bL20.